Reading from the N-terminus, the 73-residue chain is Putative defensin-like protein 270 (73 aa).

A signal peptide spans 1-23; it reads MMSSKSHFVALLLIIFLIVNVQS. Intrachain disulfides connect Cys33–Cys72, Cys39–Cys60, Cys45–Cys70, and Cys49–Cys71.

Belongs to the DEFL family.

It is found in the secreted. The chain is Putative defensin-like protein 270 from Arabidopsis thaliana (Mouse-ear cress).